The chain runs to 122 residues: Aspartate 1-decarboxylase (122 aa).

Residue Ser25 is the Schiff-base intermediate with substrate; via pyruvic acid of the active site. Residue Ser25 is modified to Pyruvic acid (Ser). Position 57 (Thr57) interacts with substrate. Tyr58 serves as the catalytic Proton donor. Substrate is bound at residue 73–75; that stretch reads GAA.

This sequence belongs to the PanD family. In terms of assembly, heterooctamer of four alpha and four beta subunits. Requires pyruvate as cofactor. Post-translationally, is synthesized initially as an inactive proenzyme, which is activated by self-cleavage at a specific serine bond to produce a beta-subunit with a hydroxyl group at its C-terminus and an alpha-subunit with a pyruvoyl group at its N-terminus.

The protein localises to the cytoplasm. The enzyme catalyses L-aspartate + H(+) = beta-alanine + CO2. The protein operates within cofactor biosynthesis; (R)-pantothenate biosynthesis; beta-alanine from L-aspartate: step 1/1. Its function is as follows. Catalyzes the pyruvoyl-dependent decarboxylation of aspartate to produce beta-alanine. The polypeptide is Aspartate 1-decarboxylase (Bordetella avium (strain 197N)).